The sequence spans 703 residues: MAPADLASEGPKLEDPPAPHLFGKCPSGLIMANVETLPVRADPGRDPLLAFAPRPAELGPPDPRLTMGSVGGGVTHAQEFPMKSVGTRTGGGGSQGSFPGPRSSGSGTNRERPGPGRYPSEDKVLANSLYLNGELRGSDHTDVCGNVVGSSGGSSSSGGSDKAPPQYREPNHPPKLLTTSGKLDQCSEPLVRPSAFKPVVPKNFHSMQNLCPPQTNGTPEGRQGPAGLKGGLEKSRTMTPAGGSGGGGLSDSGRNSLTSLPTYSSSYSQHLAPLSASTSHINRIGTPGYSSGGGGGGSGYQDLGTSDSGRASSKSGSSSSMGRSGHLGSGEGGNGGLPFAACSPPSPSALIQELEERLWEKEQEVAALRRSQEQSEAAVAQVLEERQKAWERELAELRQGCSGKLQQVARRAQRAQQGLQLQVLRLQQDKKQLQEEAAQLIRQREELEDKVAACQKEQADFLPRMEETKWEVCQKAGEISLLKQQLKDSQADVSQKLSEIVGLRSQLREGRASLREKEEQLLSLRDSFGSKQASLELSEGELPPACLKPALTPVDLVEPQEALASCESDEAKMRRQAGVAAAASLVSVDGEVDAGGEGGTRALRREVGRLQAELAAERRARERQGASFAEERRVWLEEKEKVIEYQKQLQLSYVEMYQRNQQLERRLRERGAAGGSRTPTPQHGEEEKAWTPSRLERIESTEI.

3 disordered regions span residues 1 to 22, 40 to 190, and 204 to 347; these read MAPADLASEGPKLEDPPAPHLF, RADP…SEPL, and FHSM…PPSP. The segment covering 96 to 107 has biased composition (low complexity); it reads GSFPGPRSSGSG. Positions 109-124 are enriched in basic and acidic residues; it reads NRERPGPGRYPSEDKV. The span at 205 to 218 shows a compositional bias: polar residues; sequence HSMQNLCPPQTNGT. Over residues 251 to 268 the composition is skewed to low complexity; it reads DSGRNSLTSLPTYSSSYS. A compositionally biased stretch (gly residues) spans 290–299; that stretch reads SSGGGGGGSG. Residues 304–324 are compositionally biased toward low complexity; sequence GTSDSGRASSKSGSSSSMGRS. The span at 325–336 shows a compositional bias: gly residues; sequence GHLGSGEGGNGG. Phosphoserine occurs at positions 346 and 348. Coiled-coil stretches lie at residues 348-526 and 600-669; these read SALI…SLRD and TRAL…RLRE. Positions 665–703 are disordered; the sequence is RRLRERGAAGGSRTPTPQHGEEEKAWTPSRLERIESTEI. Over residues 683-703 the composition is skewed to basic and acidic residues; the sequence is HGEEEKAWTPSRLERIESTEI.

The protein belongs to the LZTS3 family. As to quaternary structure, interacts (via C-terminus) with SHANK3 (via PDZ domain). Interacts (via coiled coil) with SIPA1L1. Can form homooligomers. As to expression, detected in brain, with highest expression in brain cortex, caudate putamen, cerebellum and hippocampus. Detected in neuropil (at protein level). Detected in brain and kidney.

The protein localises to the synapse. Its subcellular location is the postsynaptic density. It is found in the cell projection. The protein resides in the dendritic spine. It localises to the dendrite. The protein localises to the cytoplasm. Its subcellular location is the cytoskeleton. Its function is as follows. May be involved in promoting the maturation of dendritic spines, probably via regulating SIPA1L1 levels at the postsynaptic density of synapses. This is Leucine zipper putative tumor suppressor 3 from Rattus norvegicus (Rat).